We begin with the raw amino-acid sequence, 200 residues long: Probable molybdenum cofactor guanylyltransferase (200 aa).

GTP contacts are provided by residues 9–11, K21, D69, and D100; that span reads LAG. D100 contributes to the Mg(2+) binding site.

This sequence belongs to the MobA family. It depends on Mg(2+) as a cofactor.

The protein localises to the cytoplasm. It carries out the reaction Mo-molybdopterin + GTP + H(+) = Mo-molybdopterin guanine dinucleotide + diphosphate. In terms of biological role, transfers a GMP moiety from GTP to Mo-molybdopterin (Mo-MPT) cofactor (Moco or molybdenum cofactor) to form Mo-molybdopterin guanine dinucleotide (Mo-MGD) cofactor. The chain is Probable molybdenum cofactor guanylyltransferase from Bacillus cereus (strain Q1).